Here is a 525-residue protein sequence, read N- to C-terminus: Bifunctional purine biosynthesis protein PurH (525 aa).

The MGS-like domain maps to 1 to 147 (MTKIERALIS…KNWAHVAIVT (147 aa)).

The protein belongs to the PurH family.

The enzyme catalyses (6R)-10-formyltetrahydrofolate + 5-amino-1-(5-phospho-beta-D-ribosyl)imidazole-4-carboxamide = 5-formamido-1-(5-phospho-D-ribosyl)imidazole-4-carboxamide + (6S)-5,6,7,8-tetrahydrofolate. It carries out the reaction IMP + H2O = 5-formamido-1-(5-phospho-D-ribosyl)imidazole-4-carboxamide. Its pathway is purine metabolism; IMP biosynthesis via de novo pathway; 5-formamido-1-(5-phospho-D-ribosyl)imidazole-4-carboxamide from 5-amino-1-(5-phospho-D-ribosyl)imidazole-4-carboxamide (10-formyl THF route): step 1/1. The protein operates within purine metabolism; IMP biosynthesis via de novo pathway; IMP from 5-formamido-1-(5-phospho-D-ribosyl)imidazole-4-carboxamide: step 1/1. The chain is Bifunctional purine biosynthesis protein PurH from Chromobacterium violaceum (strain ATCC 12472 / DSM 30191 / JCM 1249 / CCUG 213 / NBRC 12614 / NCIMB 9131 / NCTC 9757 / MK).